Here is a 366-residue protein sequence, read N- to C-terminus: Aminomethyltransferase (366 aa).

This sequence belongs to the GcvT family. The glycine cleavage system is composed of four proteins: P, T, L and H.

The catalysed reaction is N(6)-[(R)-S(8)-aminomethyldihydrolipoyl]-L-lysyl-[protein] + (6S)-5,6,7,8-tetrahydrofolate = N(6)-[(R)-dihydrolipoyl]-L-lysyl-[protein] + (6R)-5,10-methylene-5,6,7,8-tetrahydrofolate + NH4(+). In terms of biological role, the glycine cleavage system catalyzes the degradation of glycine. This Bacillus cereus (strain G9842) protein is Aminomethyltransferase.